The chain runs to 270 residues: Bis(5'-nucleosyl)-tetraphosphatase, symmetrical (270 aa).

Belongs to the Ap4A hydrolase family.

The catalysed reaction is P(1),P(4)-bis(5'-adenosyl) tetraphosphate + H2O = 2 ADP + 2 H(+). In terms of biological role, hydrolyzes diadenosine 5',5'''-P1,P4-tetraphosphate to yield ADP. The chain is Bis(5'-nucleosyl)-tetraphosphatase, symmetrical from Thioalkalivibrio sulfidiphilus (strain HL-EbGR7).